Reading from the N-terminus, the 183-residue chain is GTP cyclohydrolase 1 (183 aa).

Residues C71, H74, and C142 each coordinate Zn(2+).

This sequence belongs to the GTP cyclohydrolase I family. Toroid-shaped homodecamer, composed of two pentamers of five dimers.

The catalysed reaction is GTP + H2O = 7,8-dihydroneopterin 3'-triphosphate + formate + H(+). The protein operates within cofactor biosynthesis; 7,8-dihydroneopterin triphosphate biosynthesis; 7,8-dihydroneopterin triphosphate from GTP: step 1/1. This Leptospira borgpetersenii serovar Hardjo-bovis (strain JB197) protein is GTP cyclohydrolase 1.